We begin with the raw amino-acid sequence, 243 residues long: Probable transcriptional regulatory protein BP2308 (243 aa).

The segment at 1–21 is disordered; sequence MAGHSKWANIQHRKGRQDAKR.

It belongs to the TACO1 family.

The protein localises to the cytoplasm. The sequence is that of Probable transcriptional regulatory protein BP2308 from Bordetella pertussis (strain Tohama I / ATCC BAA-589 / NCTC 13251).